The primary structure comprises 252 residues: Ribonuclease HII (252 aa).

The 192-residue stretch at 41-232 (LLVAGVDEAG…VRLALEGREQ (192 aa)) folds into the RNase H type-2 domain. Residues Asp47, Glu48, and Asp140 each contribute to the a divalent metal cation site.

This sequence belongs to the RNase HII family. Requires Mn(2+) as cofactor. Mg(2+) is required as a cofactor.

It is found in the cytoplasm. It catalyses the reaction Endonucleolytic cleavage to 5'-phosphomonoester.. Functionally, endonuclease that specifically degrades the RNA of RNA-DNA hybrids. The polypeptide is Ribonuclease HII (Xanthomonas oryzae pv. oryzae (strain KACC10331 / KXO85)).